The following is a 502-amino-acid chain: ATP synthase subunit alpha (502 aa).

Residue G170–T177 participates in ATP binding.

It belongs to the ATPase alpha/beta chains family. F-type ATPases have 2 components, CF(1) - the catalytic core - and CF(0) - the membrane proton channel. CF(1) has five subunits: alpha(3), beta(3), gamma(1), delta(1), epsilon(1). CF(0) has four main subunits: a, b, b' and c.

It localises to the cellular thylakoid membrane. The enzyme catalyses ATP + H2O + 4 H(+)(in) = ADP + phosphate + 5 H(+)(out). Produces ATP from ADP in the presence of a proton gradient across the membrane. The alpha chain is a regulatory subunit. This is ATP synthase subunit alpha from Microcystis aeruginosa (strain NIES-843 / IAM M-2473).